A 629-amino-acid chain; its full sequence is Chaperone protein DnaK (629 aa).

A compositionally biased stretch (low complexity) spans 576-587 (QAYQQQQDAQAG). Residues 576–629 (QAYQQQQDAQAGAAGGAGGMGGMGGMADGPGGAADADGDDEEYVDADFEDVDEE) form a disordered region. Positions 588 to 607 (AAGGAGGMGGMGGMADGPGG) are enriched in gly residues. Residues 611 to 629 (ADGDDEEYVDADFEDVDEE) show a composition bias toward acidic residues.

The protein belongs to the heat shock protein 70 family.

Acts as a chaperone. The protein is Chaperone protein DnaK of Halobacterium salinarum (strain ATCC 29341 / DSM 671 / R1).